Here is a 347-residue protein sequence, read N- to C-terminus: Protein RecA (347 aa).

An ATP-binding site is contributed by 65–72 (GPESSGKT).

It belongs to the RecA family.

Its subcellular location is the cytoplasm. Can catalyze the hydrolysis of ATP in the presence of single-stranded DNA, the ATP-dependent uptake of single-stranded DNA by duplex DNA, and the ATP-dependent hybridization of homologous single-stranded DNAs. It interacts with LexA causing its activation and leading to its autocatalytic cleavage. In Marinobacter nauticus (strain ATCC 700491 / DSM 11845 / VT8) (Marinobacter aquaeolei), this protein is Protein RecA.